The primary structure comprises 281 residues: UPF0162 protein XF_1494 (281 aa).

TPR repeat units follow at residues 193 to 226 (VRIL…VPNQ) and 227 to 260 (PEAL…YPST).

It belongs to the UPF0162 family.

The polypeptide is UPF0162 protein XF_1494 (Xylella fastidiosa (strain 9a5c)).